Reading from the N-terminus, the 71-residue chain is Stathmin-1-B (71 aa).

The stretch at 1-67 (KREHEKEVLQ…EIRKGKECKE (67 aa)) forms a coiled coil. An SLD domain is found at 1-71 (KREHEKEVLQ…GKECKEPSED (71 aa)).

It belongs to the stathmin family. As to quaternary structure, binds to two alpha/beta-tubulin heterodimers. From unphosphorylated forms to highly phosphorylated ones in the mature egg, followed by progressive dephosphorylation from the mid-blastula to the tailbud stage. Ubiquitous. Mostly abundant in brain and oocytes.

It localises to the cytoplasm. The protein localises to the cytoskeleton. In terms of biological role, involved in the regulation of the microtubule (MT) filament system by destabilizing microtubules. It prevents assembly and promotes disassembly of microtubules. In Xenopus laevis (African clawed frog), this protein is Stathmin-1-B (stmn1-b).